The following is a 452-amino-acid chain: Isocitrate dehydrogenase [NADP], mitochondrial (452 aa).

A mitochondrion-targeting transit peptide spans 1-39 (MAGYLRVVRSLCRASGSRPAWAPAALTAPTSQEQPRRHY). N6-acetyllysine occurs at positions 45, 48, 67, and 69. An N6-acetyllysine; alternate mark is found at Lys-80 and Lys-106. 2 positions are modified to N6-succinyllysine; alternate: Lys-80 and Lys-106. NADP(+)-binding positions include 115 to 117 (TIT) and Arg-122. Thr-117 lines the D-threo-isocitrate pocket. D-threo-isocitrate-binding positions include 134–140 (SPNGTIR) and Arg-149. N6-acetyllysine is present on Lys-155. At Lys-166 the chain carries N6-acetyllysine; alternate. N6-succinyllysine; alternate is present on Lys-166. Residue Arg-172 participates in D-threo-isocitrate binding. An N6-acetyllysine; alternate mark is found at Lys-180 and Lys-193. N6-succinyllysine; alternate is present on residues Lys-180 and Lys-193. Lys-199 carries the post-translational modification N6-acetyllysine. Lys-256 carries the N6-acetyllysine; alternate modification. Lys-256 is modified (N6-succinyllysine; alternate). Lys-263, Lys-272, Lys-275, and Lys-280 each carry N6-acetyllysine. Position 282 is an N6-acetyllysine; alternate (Lys-282). Residue Lys-282 is modified to N6-succinyllysine; alternate. Asp-291 is a binding site for Mn(2+). NADP(+) is bound at residue Lys-299. Asp-314 is a binding site for Mn(2+). Residues 349-354 (GTVTRH) and Asn-367 each bind NADP(+). The residue at position 384 (Lys-384) is an N6-acetyllysine; alternate. Residue Lys-384 is modified to N6-succinyllysine; alternate. N6-acetyllysine occurs at positions 400, 413, and 442.

The protein belongs to the isocitrate and isopropylmalate dehydrogenases family. In terms of assembly, homodimer. Mg(2+) serves as cofactor. Requires Mn(2+) as cofactor. Acetylation at Lys-413 dramatically reduces catalytic activity. Deacetylated by SIRT3.

It localises to the mitochondrion. The catalysed reaction is D-threo-isocitrate + NADP(+) = 2-oxoglutarate + CO2 + NADPH. Its function is as follows. Plays a role in intermediary metabolism and energy production. It may tightly associate or interact with the pyruvate dehydrogenase complex. The polypeptide is Isocitrate dehydrogenase [NADP], mitochondrial (IDH2) (Homo sapiens (Human)).